The chain runs to 381 residues: Heme A synthase (381 aa).

A disordered region spans residues 1-28 (MSNRTIFEEVSSDSKQQSSPTPGGIDRK). 8 helical membrane passes run 36 to 56 (IRVW…VGGL), 125 to 145 (VIGL…SIPT), 151 to 171 (LLLP…MVAS), 187 to 207 (LATH…YMFL), 230 to 250 (STGL…VAGI), 287 to 307 (LVQF…VVVW), 320 to 340 (FAFN…IVTV), and 344 to 364 (APVE…VLIL). Heme is bound at residue histidine 292. Histidine 352 provides a ligand contact to heme.

Belongs to the COX15/CtaA family. Type 2 subfamily. As to quaternary structure, interacts with CtaB. Heme b is required as a cofactor.

It is found in the cell membrane. It catalyses the reaction Fe(II)-heme o + 2 A + H2O = Fe(II)-heme a + 2 AH2. Its pathway is porphyrin-containing compound metabolism; heme A biosynthesis; heme A from heme O: step 1/1. Its function is as follows. Catalyzes the conversion of heme O to heme A by two successive hydroxylations of the methyl group at C8. The first hydroxylation forms heme I, the second hydroxylation results in an unstable dihydroxymethyl group, which spontaneously dehydrates, resulting in the formyl group of heme A. The chain is Heme A synthase from Ruegeria sp. (strain TM1040) (Silicibacter sp.).